The sequence spans 498 residues: ATP synthase subunit beta, chloroplastic (498 aa).

172–179 serves as a coordination point for ATP; the sequence is GGAGVGKT.

The protein belongs to the ATPase alpha/beta chains family. As to quaternary structure, F-type ATPases have 2 components, CF(1) - the catalytic core - and CF(0) - the membrane proton channel. CF(1) has five subunits: alpha(3), beta(3), gamma(1), delta(1), epsilon(1). CF(0) has four main subunits: a(1), b(1), b'(1) and c(9-12).

Its subcellular location is the plastid. The protein resides in the chloroplast thylakoid membrane. The enzyme catalyses ATP + H2O + 4 H(+)(in) = ADP + phosphate + 5 H(+)(out). Produces ATP from ADP in the presence of a proton gradient across the membrane. The catalytic sites are hosted primarily by the beta subunits. This is ATP synthase subunit beta, chloroplastic from Atropa belladonna (Belladonna).